Consider the following 146-residue polypeptide: Globin-1 (146 aa).

Positions 9–146 constitute a Globin domain; it reads QLTADVKKDL…KLVAVVQAAL (138 aa). Heme b is bound at residue H101.

It belongs to the globin family. Homodimer.

Its subcellular location is the cytoplasm. This Anadara broughtonii (Blood clam) protein is Globin-1.